A 563-amino-acid polypeptide reads, in one-letter code: PTS system fructose-specific EIIB'BC component (563 aa).

2 consecutive PTS EIIB type-2 domains span residues 1 to 85 and 104 to 201; these read MKTL…KGHA and KRVV…KAVA. C112 serves as the catalytic Phosphocysteine intermediate; for EIIB activity. Phosphocysteine; by EIIA is present on C112. In terms of domain architecture, PTS EIIC type-2 spans 226 to 561; that stretch reads AYRHLLTGVS…KRPEVDAVAK (336 aa). The next 9 helical transmembrane spans lie at 236 to 256, 274 to 294, 304 to 324, 349 to 369, 382 to 402, 430 to 450, 463 to 483, 489 to 509, and 518 to 538; these read YMLP…AFGI, GGSA…FSIA, IGGM…IAGF, ILII…YLIG, WLQT…GGMM, MAAI…ATMV, GKAA…PFAA, VLPC…AIGA, and LFVL…VAII.

The protein resides in the cell inner membrane. It carries out the reaction D-fructose(out) + N(pros)-phospho-L-histidyl-[protein] = D-fructose 1-phosphate(in) + L-histidyl-[protein]. The phosphoenolpyruvate-dependent sugar phosphotransferase system (sugar PTS), a major carbohydrate active transport system, catalyzes the phosphorylation of incoming sugar substrates concomitantly with their translocation across the cell membrane. The enzyme II FruAB PTS system is involved in fructose transport. The protein is PTS system fructose-specific EIIB'BC component of Escherichia coli (strain K12).